A 384-amino-acid chain; its full sequence is Xylose repressor (384 aa).

Residues 29–48 (RAKLSEMTGLNKSTVSSQVN) constitute a DNA-binding region (H-T-H motif).

The protein belongs to the ROK (NagC/XylR) family.

Transcriptional repressor of xylose-utilizing enzymes. This Bacillus spizizenii (strain ATCC 23059 / NRRL B-14472 / W23) (Bacillus subtilis subsp. spizizenii) protein is Xylose repressor (xylR).